Here is a 477-residue protein sequence, read N- to C-terminus: EDLSLVGQPENDYDTGDDBTAADPDSNNTAAALDVRRPLPSGTRVRRPPLRHRRLAPGAVMSRDPPASPRPQEAQKAIRDEGGCMLPESDLGVLCPTGCELREELLKQRDPVRYKISMLKQNLTYFINSFDRMASDSNTLKQNVQTLRRRLNSRSSTHVNAQKEIENRYKEVKIRIESTVAGSLRSMKSVLEHLRAKMQRMEEAIKTQKELCSAPCTVNCRVPVVSGMHCEDIYRNGGRTSEAYYIQPDLFSEPYKVFCDMESHGGGWTVVQNRVDGSSNFARDWNTYKAEFGNIAFGNGKSICNIPGEYWLGTKTVHQLTKQHTQQVLFDMSDWEGSSVYAQYASFRPENEAQGYRLWVEDYSGNAGNALLEGATQLMGDNRTMTIHNGMQFSTFDRDNDNWNPGDPTKHCSREDAGGWWYNRCHAANPNGRYYWGGIYTKEQADYGTDDGVVWMNWKGSWYSMRQMAMKLRPKWP.

Residues 1–76 (EDLSLVGQPE…ASPRPQEAQK (76 aa)) form a disordered region. Tyrosine 13 is modified (sulfotyrosine). Asparagine 27 carries N-linked (GlcNAc...) asparagine glycosylation. The span at 44–55 (RVRRPPLRHRRL) shows a compositional bias: basic residues. Disulfide bonds link cysteine 220/cysteine 304, cysteine 230/cysteine 259, and cysteine 412/cysteine 425. A Fibrinogen C-terminal domain is found at 221–476 (RVPVVSGMHC…QMAMKLRPKW (256 aa)).

In terms of assembly, heterohexamer; disulfide linked. Contains 2 sets of 3 non-identical chains (alpha, beta and gamma). The 2 heterotrimers are in head to head conformation with the N-termini in a small central domain. Post-translationally, conversion of fibrinogen to fibrin is triggered by thrombin, which cleaves fibrinopeptides A and B from alpha and beta chains, and thus exposes the N-terminal polymerization sites responsible for the formation of the soft clot. The soft clot is converted into the hard clot by factor XIIIA which catalyzes the epsilon-(gamma-glutamyl)lysine cross-linking between gamma chains (stronger) and between alpha chains (weaker) of different monomers.

Its subcellular location is the secreted. Functionally, fibrinogen has a double function: yielding monomers that polymerize into fibrin and acting as a cofactor in platelet aggregation. In Petromyzon marinus (Sea lamprey), this protein is Fibrinogen beta chain.